Consider the following 699-residue polypeptide: Elongation factor G (699 aa).

The 281-residue stretch at 8–288 (EDYRNFGIMA…AVVDYLPSPL (281 aa)) folds into the tr-type G domain. GTP contacts are provided by residues 17 to 24 (AHIDAGKT), 86 to 90 (DTPGH), and 140 to 143 (NKMD).

The protein belongs to the TRAFAC class translation factor GTPase superfamily. Classic translation factor GTPase family. EF-G/EF-2 subfamily.

It localises to the cytoplasm. Functionally, catalyzes the GTP-dependent ribosomal translocation step during translation elongation. During this step, the ribosome changes from the pre-translocational (PRE) to the post-translocational (POST) state as the newly formed A-site-bound peptidyl-tRNA and P-site-bound deacylated tRNA move to the P and E sites, respectively. Catalyzes the coordinated movement of the two tRNA molecules, the mRNA and conformational changes in the ribosome. The polypeptide is Elongation factor G (Rhizobium rhizogenes (strain K84 / ATCC BAA-868) (Agrobacterium radiobacter)).